A 1337-amino-acid polypeptide reads, in one-letter code: Sister chromatid cohesion protein PDS5 homolog A (1337 aa).

Met-1 is modified (N-acetylmethionine). The stretch at 393 to 429 is one HEAT repeat; it reads ALVNDQLLGFVRERTLDKRWRVRKEAMMGLAQLYKKY. Position 1097 is a phosphoserine (Ser-1097). Lys-1146 is modified (N6-acetyllysine). The disordered stretch occupies residues 1150-1337; the sequence is ATGRKPYVRS…PAERQIDLQR (188 aa). Over residues 1159–1180 the composition is skewed to polar residues; it reads STGTETGSNINVNSELNPSTGN. A Phosphoserine modification is found at Ser-1195. At Thr-1208 the chain carries Phosphothreonine. Lys-1211 carries the post-translational modification N6-acetyllysine. The segment covering 1223–1233 has biased composition (polar residues); that stretch reads SDQATQGNISS. N6-acetyllysine is present on Lys-1290. Ser-1305 is subject to Phosphoserine. Over residues 1321-1337 the composition is skewed to basic and acidic residues; it reads DLAKKAAPAERQIDLQR.

This sequence belongs to the PDS5 family. Interacts with the cohesin complex. Interacts with WAPL (via FGF motifs) or CDCA5 (via the FGF motif); the interaction is direct, cohesin-dependent and competitive. Interacts with SMC3. Interacts with TP63. In terms of tissue distribution, highest level in colon. Low levels in lung, ovary, breast and kidney. Reduced level in renal tumor tissue. Isoform 2 is expressed in kidney.

The protein localises to the nucleus. Probable regulator of sister chromatid cohesion in mitosis which may stabilize cohesin complex association with chromatin. May couple sister chromatid cohesion during mitosis to DNA replication. Cohesion ensures that chromosome partitioning is accurate in both meiotic and mitotic cells and plays an important role in DNA repair. The sequence is that of Sister chromatid cohesion protein PDS5 homolog A from Homo sapiens (Human).